A 129-amino-acid chain; its full sequence is Ig lambda-1 chain V regions MOPC 104E/RPC20/J558/S104 (129 aa).

The signal sequence occupies residues 1–19 (MAWISLILSLLALSSGAIS). Glutamine 20 carries the pyrrolidone carboxylic acid modification. In terms of domain architecture, Ig-like spans 20 to 125 (QAVVTQESAL…HWVFGGGTKL (106 aa)).

This Mus musculus (Mouse) protein is Ig lambda-1 chain V regions MOPC 104E/RPC20/J558/S104.